We begin with the raw amino-acid sequence, 239 residues long: Heptaprenylglyceryl phosphate synthase (239 aa).

K12 contacts sn-glycerol 1-phosphate. Mg(2+) contacts are provided by D14 and T40. Sn-glycerol 1-phosphate is bound by residues Y159–G164, G189, and G209–N210.

Belongs to the GGGP/HepGP synthase family. Group I subfamily. Homodimer. The cofactor is Mg(2+).

The catalysed reaction is sn-glycerol 1-phosphate + all-trans-heptaprenyl diphosphate = 3-heptaprenyl-sn-glycero-1-phosphate + diphosphate. It functions in the pathway membrane lipid metabolism; glycerophospholipid metabolism. Functionally, prenyltransferase that catalyzes in vivo the transfer of the heptaprenyl moiety of heptaprenyl pyrophosphate (HepPP; 35 carbon atoms) to the C3 hydroxyl of sn-glycerol-1-phosphate (G1P), producing heptaprenylglyceryl phosphate (HepGP). This reaction is an ether-bond-formation step in the biosynthesis of archaea-type G1P-based membrane lipids found in Bacillales. To a much lesser extent, is also able to use geranylgeranyl diphosphate (GGPP; C20) as the prenyl donor. The chain is Heptaprenylglyceryl phosphate synthase from Geobacillus kaustophilus (strain HTA426).